A 125-amino-acid chain; its full sequence is S-adenosylmethionine decarboxylase proenzyme (125 aa).

The active-site Schiff-base intermediate with substrate; via pyruvic acid is the Ser71. The residue at position 71 (Ser71) is a Pyruvic acid (Ser); by autocatalysis. The active-site Proton acceptor; for processing activity is the His76. Cys91 serves as the catalytic Proton donor; for catalytic activity.

This sequence belongs to the prokaryotic AdoMetDC family. Type 1 subfamily. As to quaternary structure, heterotetramer of two alpha and two beta chains arranged as a dimer of alpha/beta heterodimers. It depends on pyruvate as a cofactor. Post-translationally, is synthesized initially as an inactive proenzyme. Formation of the active enzyme involves a self-maturation process in which the active site pyruvoyl group is generated from an internal serine residue via an autocatalytic post-translational modification. Two non-identical subunits are generated from the proenzyme in this reaction, and the pyruvate is formed at the N-terminus of the alpha chain, which is derived from the carboxyl end of the proenzyme. The post-translation cleavage follows an unusual pathway, termed non-hydrolytic serinolysis, in which the side chain hydroxyl group of the serine supplies its oxygen atom to form the C-terminus of the beta chain, while the remainder of the serine residue undergoes an oxidative deamination to produce ammonia and the pyruvoyl group blocking the N-terminus of the alpha chain.

It catalyses the reaction S-adenosyl-L-methionine + H(+) = S-adenosyl 3-(methylsulfanyl)propylamine + CO2. It functions in the pathway amine and polyamine biosynthesis; S-adenosylmethioninamine biosynthesis; S-adenosylmethioninamine from S-adenosyl-L-methionine: step 1/1. Functionally, catalyzes the decarboxylation of S-adenosylmethionine to S-adenosylmethioninamine (dcAdoMet), the propylamine donor required for the synthesis of the polyamines spermine and spermidine from the diamine putrescine. The chain is S-adenosylmethionine decarboxylase proenzyme from Pyrobaculum arsenaticum (strain DSM 13514 / JCM 11321 / PZ6).